Reading from the N-terminus, the 102-residue chain is NADH-quinone oxidoreductase subunit K (102 aa).

3 helical membrane passes run 5 to 25 (IMHY…GIFL), 31 to 51 (IIIL…FVAF), and 66 to 86 (FILT…VVFF).

This sequence belongs to the complex I subunit 4L family. In terms of assembly, NDH-1 is composed of 14 different subunits. Subunits NuoA, H, J, K, L, M, N constitute the membrane sector of the complex.

It localises to the cell inner membrane. It catalyses the reaction a quinone + NADH + 5 H(+)(in) = a quinol + NAD(+) + 4 H(+)(out). In terms of biological role, NDH-1 shuttles electrons from NADH, via FMN and iron-sulfur (Fe-S) centers, to quinones in the respiratory chain. The immediate electron acceptor for the enzyme in this species is believed to be ubiquinone. Couples the redox reaction to proton translocation (for every two electrons transferred, four hydrogen ions are translocated across the cytoplasmic membrane), and thus conserves the redox energy in a proton gradient. The protein is NADH-quinone oxidoreductase subunit K of Bartonella henselae (strain ATCC 49882 / DSM 28221 / CCUG 30454 / Houston 1) (Rochalimaea henselae).